Reading from the N-terminus, the 293-residue chain is Probable rRNA-processing protein EBP2 homolog (293 aa).

Residues 1–37 (MSLEEDIVSDDEMNMIDEDDATDSEAESLSDSDTENE) show a composition bias toward acidic residues. Disordered regions lie at residues 1–45 (MSLE…LAEP) and 150–293 (IEES…RQKR). Residues 135 to 190 (HMEKVKSRLLHEKKQIEESEERRKARDNKRMAKEVQSQKMKERAKEKKDNIESVKK) are a coiled coil. Composition is skewed to basic and acidic residues over residues 150–167 (IEESEERRKARDNKRMAK), 173–189 (KMKERAKEKKDNIESVK), and 247–256 (KKREFRDSKF). The span at 265 to 275 (SKQNTAETTND) shows a compositional bias: polar residues.

It belongs to the EBP2 family. Interacts with NSN1.

The protein localises to the nucleus. Its subcellular location is the nucleolus. Functionally, required for the processing of the 27S pre-rRNA. Plays an important role in plant growth and senescence by modulating ribosome biogenesis in nucleolus. Associates with ribosomes. The sequence is that of Probable rRNA-processing protein EBP2 homolog from Arabidopsis thaliana (Mouse-ear cress).